We begin with the raw amino-acid sequence, 68 residues long: Pleurocidin-like peptide WF4 (68 aa).

The first 22 residues, 1–22, serve as a signal peptide directing secretion; it reads MKFTATFLMMFIFVLMVEPGEC. A propeptide spanning residues 48-68 is cleaved from the precursor; that stretch reads GEQQDLDKRAVDEDPNVIVFE.

The protein belongs to the pleurocidin family.

The protein resides in the secreted. In terms of biological role, antimicrobial peptide. This Pseudopleuronectes americanus (Winter flounder) protein is Pleurocidin-like peptide WF4 (ple4).